We begin with the raw amino-acid sequence, 60 residues long: Metallothionein (60 aa).

The beta stretch occupies residues 1-28 (MDPCDCSKTGKCNCGGSCTCTNCSCTSC). 20 residues coordinate a divalent metal cation: cysteine 4, cysteine 6, cysteine 12, cysteine 14, cysteine 18, cysteine 20, cysteine 23, cysteine 25, cysteine 28, cysteine 32, cysteine 33, cysteine 35, cysteine 36, cysteine 40, cysteine 43, cysteine 47, cysteine 49, cysteine 54, cysteine 58, and cysteine 59. An alpha region spans residues 29–60 (KKSCCACCPSGCTKCASGCVCKGKTCDTTCCQ).

It belongs to the metallothionein superfamily. Type 1 family.

Functionally, metallothioneins have a high content of cysteine residues that bind various heavy metals. This Oryzias latipes (Japanese rice fish) protein is Metallothionein (mt).